The following is a 369-amino-acid chain: Transmembrane protein 198 (369 aa).

The next 7 membrane-spanning stretches (helical) occupy residues 37–57 (VVPS…CFFG), 60–80 (CFKA…IFLL), 93–113 (VEAS…VTML), 117–137 (VGLF…TLIG), 148–168 (SVWV…VLTL), 181–201 (VFGA…FALV), and 216–236 (VCWT…LGVL). Residues 266-308 (RQKEERRESSRKKKRKQPQSAQHTHAAKALHPEPAYRRKPNPI) form a disordered region.

Belongs to the TMEM198 family.

It is found in the membrane. In Danio rerio (Zebrafish), this protein is Transmembrane protein 198 (tmem198ab).